A 20-amino-acid chain; its full sequence is Equinatoxin-1'' (20 aa).

The tract at residues 3–12 (AVAGAVIEGA) is plays an important role in the hemolytic activity. Residues 11-20 (GATLTFNVLQ) are N-terminal region.

This sequence belongs to the actinoporin family. Sea anemone subfamily. Octamer or nonamer in membranes. Monomer in the soluble state.

It is found in the secreted. The protein resides in the nematocyst. Its subcellular location is the target cell membrane. Functionally, pore-forming protein that forms cations-selective hydrophilic pores of around 1 nm and causes cardiac stimulation and cytolysis. Pore formation is a multi-step process that involves specific recognition of membrane sphingomyelin (but neither cholesterol nor phosphatidylcholine) using aromatic rich region and adjacent phosphocholine (POC) binding site, firm binding to the membrane (mainly driven by hydrophobic interactions) accompanied by the transfer of the N-terminal region to the lipid-water interface and finally pore formation after oligomerization of monomers. Cytolytic effects include red blood cells hemolysis, platelet aggregation and lysis, cytotoxic and cytostatic effects on fibroblasts. Lethality in mammals has been ascribed to severe vasospasm of coronary vessels, cardiac arrhythmia, and inotropic effects. The polypeptide is Equinatoxin-1'' (Actinia equina (Beadlet anemone)).